Consider the following 58-residue polypeptide: UPF0434 protein Daro_3207 (58 aa).

It belongs to the UPF0434 family.

The sequence is that of UPF0434 protein Daro_3207 from Dechloromonas aromatica (strain RCB).